The chain runs to 205 residues: Protein TON_1965 (205 aa).

Residues 7-201 (EWGEFLVRLA…EEYPKGPVKR (195 aa)) enclose the AMMECR1 domain.

The protein is Protein TON_1965 of Thermococcus onnurineus (strain NA1).